Reading from the N-terminus, the 150-residue chain is MTTRTLRFYALVGFLVFLDQVTKYLAHAYLARDFIVIPNLFRLTLAKNSGAAFSFGTGFSWLFFLLGIIALIFIGWFLPRTTGSIVFLALLQGGIAGNVFDRLFKPPYFGNGEVVDFLNTPLFSGVVFNIADLFILAGVFGTFLFLKGSK.

Transmembrane regions (helical) follow at residues 8 to 28, 58 to 78, and 81 to 101; these read FYAL…LAHA, GFSW…GWFL, and TTGS…NVFD. Active-site residues include Asp-116 and Asp-132. The helical transmembrane segment at 126–146 threads the bilayer; that stretch reads VVFNIADLFILAGVFGTFLFL.

It belongs to the peptidase A8 family.

It is found in the cell membrane. The enzyme catalyses Release of signal peptides from bacterial membrane prolipoproteins. Hydrolyzes -Xaa-Yaa-Zaa-|-(S,diacylglyceryl)Cys-, in which Xaa is hydrophobic (preferably Leu), and Yaa (Ala or Ser) and Zaa (Gly or Ala) have small, neutral side chains.. The protein operates within protein modification; lipoprotein biosynthesis (signal peptide cleavage). Its function is as follows. This protein specifically catalyzes the removal of signal peptides from prolipoproteins. This Tropheryma whipplei (strain TW08/27) (Whipple's bacillus) protein is Lipoprotein signal peptidase.